We begin with the raw amino-acid sequence, 962 residues long: Glycine dehydrogenase (decarboxylating) (962 aa).

Lys-709 is modified (N6-(pyridoxal phosphate)lysine).

It belongs to the GcvP family. The glycine cleavage system is composed of four proteins: P, T, L and H. Pyridoxal 5'-phosphate serves as cofactor.

The enzyme catalyses N(6)-[(R)-lipoyl]-L-lysyl-[glycine-cleavage complex H protein] + glycine + H(+) = N(6)-[(R)-S(8)-aminomethyldihydrolipoyl]-L-lysyl-[glycine-cleavage complex H protein] + CO2. The glycine cleavage system catalyzes the degradation of glycine. The P protein binds the alpha-amino group of glycine through its pyridoxal phosphate cofactor; CO(2) is released and the remaining methylamine moiety is then transferred to the lipoamide cofactor of the H protein. The chain is Glycine dehydrogenase (decarboxylating) from Shewanella baltica (strain OS195).